We begin with the raw amino-acid sequence, 398 residues long: Cytohesin-1 (398 aa).

Met-1 bears the N-acetylmethionine mark. The interval 1–60 (MEDDDSYVPSDLTAEERQELENIRRRKQELLADIQRLKEEIAEVANEIESLGSTEERKNM) is necessary for localization at adherens junction. The stretch at 10-67 (SDLTAEERQELENIRRRKQELLADIQRLKEEIAEVANEIESLGSTEERKNMQRNKQVA) forms a coiled coil. Positions 73–202 (FNMDPKKGIQ…IIMLNTSLHN (130 aa)) constitute an SEC7 domain. Positions 260–377 (NPDREGWLLK…WIKCIKAAIS (118 aa)) constitute a PH domain. Residues 269 to 277 (KLGGGRVKT), Arg-281, Tyr-292, Arg-302, and Asn-351 each bind a 1,2-diacyl-sn-glycero-3-phospho-(1D-myo-inositol-3,4,5-trisphosphate). Residues 388-396 (RKKKVSSTK) form a C-terminal autoinhibitory region region.

In terms of assembly, interacts with TRIM23 and CYTIP. Interacts (via coiled-coil domain) with FRMD4A (via coiled-coil domain). Interacts with FRMD4B. Found in a complex with PARD3, CYTH1 and FRMD4A. Interacts (via N-terminal domain) with INAVA (via N-terminal domain). Post-translationally, ubiquitinated by SCF(FBXW11) E3 ubiquitin-protein ligase complex. Ubiquitination induces proteasomal degradation. In terms of tissue distribution, expressed in colon and small intestine (at protein level).

The protein localises to the cell membrane. Its subcellular location is the cytoplasm. The protein resides in the cytosol. It is found in the cell junction. It localises to the tight junction. The protein localises to the adherens junction. Functionally, promotes guanine-nucleotide exchange on ARF1, ARF5 and ARF6. Promotes the activation of ARF factors through replacement of GDP with GTP. Plays an important role in membrane trafficking, during junctional remodeling and epithelial polarization, through regulation of ARF6 activity. This is Cytohesin-1 (Cyth1) from Mus musculus (Mouse).